Consider the following 75-residue polypeptide: Acyl carrier protein (75 aa).

The Carrier domain maps to 1–75 (MALFDDVKEV…GDAIKFIENV (75 aa)). An O-(pantetheine 4'-phosphoryl)serine modification is found at Ser36.

The protein belongs to the acyl carrier protein (ACP) family. Post-translationally, 4'-phosphopantetheine is transferred from CoA to a specific serine of apo-ACP by AcpS. This modification is essential for activity because fatty acids are bound in thioester linkage to the sulfhydryl of the prosthetic group.

It localises to the cytoplasm. It functions in the pathway lipid metabolism; fatty acid biosynthesis. Carrier of the growing fatty acid chain in fatty acid biosynthesis. This Sulfurovum sp. (strain NBC37-1) protein is Acyl carrier protein.